A 38-amino-acid chain; its full sequence is Photosystem II reaction center protein L (38 aa).

Residues 17 to 37 (SLFWGLLLIFVLAVLFSSYFF) form a helical membrane-spanning segment.

The protein belongs to the PsbL family. In terms of assembly, PSII is composed of 1 copy each of membrane proteins PsbA, PsbB, PsbC, PsbD, PsbE, PsbF, PsbH, PsbI, PsbJ, PsbK, PsbL, PsbM, PsbT, PsbX, PsbY, PsbZ, Psb30/Ycf12, at least 3 peripheral proteins of the oxygen-evolving complex and a large number of cofactors. It forms dimeric complexes.

The protein localises to the plastid. Its subcellular location is the chloroplast thylakoid membrane. In terms of biological role, one of the components of the core complex of photosystem II (PSII). PSII is a light-driven water:plastoquinone oxidoreductase that uses light energy to abstract electrons from H(2)O, generating O(2) and a proton gradient subsequently used for ATP formation. It consists of a core antenna complex that captures photons, and an electron transfer chain that converts photonic excitation into a charge separation. This subunit is found at the monomer-monomer interface and is required for correct PSII assembly and/or dimerization. This is Photosystem II reaction center protein L from Porphyra purpurea (Red seaweed).